Reading from the N-terminus, the 301-residue chain is Lufaxin (301 aa).

The N-terminal stretch at 1–23 is a signal peptide; sequence MNSINFLSIVGLISFGFIVAVKC. Disulfide bonds link cysteine 52/cysteine 60, cysteine 78/cysteine 137, cysteine 102/cysteine 112, and cysteine 258/cysteine 265. The N-linked (GlcNAc...) asparagine glycan is linked to asparagine 262.

In terms of assembly, interacts with factor Xa. Associates with complement proconvertase C3b-B complex. In terms of tissue distribution, expressed in salivary glands.

Its subcellular location is the secreted. Its function is as follows. Sand fly salivary protein with antithrombotic, and anti-complement (alternative pathway) activities. Is a slow, tight, non-competitive, and reversible inhibitor of factor Xa (FXa, F10). Is specific for FXa (Kd=3.86 nM) and does not interact with non-activated FX, or all other enzymes tested. In addition, it blocks prothrombinase and increases both prothrombin time and activated partial thromboplastin time. It also prevents protease-activated receptor 2 (F2RL1, PAR2) activation by FXa. In vivo, it abrogates edema formation triggered by injection of FXa in the paw of mice. Moreover, it prevents FeCl(3)-induced carotid artery thrombus formation and prolongs activated partial thromboplastin time ex vivo, implying that it works as an anticoagulant in vivo. It also inhibits the early steps of the alternative pathway of complement by direct binding to the proconvertase C3b-B complex, by inhibiting activation of factor B and consequently the formation of the C3 convertase. In Lutzomyia longipalpis (Sand fly), this protein is Lufaxin.